We begin with the raw amino-acid sequence, 347 residues long: NHL repeat-containing protein 3 (347 aa).

Positions 1–25 (MARFWVCVAGAGFFLAFLVLHSRFC) are cleaved as a signal peptide. N-linked (GlcNAc...) asparagine glycosylation occurs at Asn-32. The stretch at 47–93 (RLDVGWPKHPEYFTGTTFCVAVDSLNGLVYIGQRGDNIPKILVFTED) is one NHL 1 repeat. Asn-101 carries an N-linked (GlcNAc...) asparagine glycan. NHL repeat units lie at residues 150–196 (TPGK…LSQD) and 200–243 (LWLH…FDKD). N-linked (GlcNAc...) asparagine glycosylation is found at Asn-206 and Asn-278. The stretch at 294 to 338 (GECSVISTIQLADQVLPHLLEVDRKTGAVYVAEIGAKQVQKYVPL) is one NHL 4 repeat.

The protein resides in the secreted. The polypeptide is NHL repeat-containing protein 3 (NHLRC3) (Homo sapiens (Human)).